Reading from the N-terminus, the 448-residue chain is MNLFRQIPKVDKIEKALTHIPKKVLTPIIQKTLNEIREGIKNGKITQINEEDIVKTIEKRSEEILSPSIVNVINATGITVHTNLGRSLIDPEIFDYAKKRSTHYCNLEYDLEKGKRGDRYHHSAKILSHLFGSESALIVNNNAAAVFLILNTFAKDKEAIVSRGELVEIGGSFRVPEVMKASGAKLVEVGTTNKTKIQDYEDAITEDTAMLMKVHKSNYSIEGFSAEASLEEIIELAHKKNVLDYYDLGSAYIPKLPYSLTNYEPPISEIMKLNPSLVSFSGDKLFGSVQAGIILGKKDLIDKLKKNQILRMFRVDKITLSLIEATALAYIKEEYDKIPTLKSIFQTTEALKEKAKKLLSLTPGLKAEIKESHTYVGGGTMPNRKIPTVVVEIKGNAKKWEEDMRKHLVIGRIENEKFVLDMRSVQEDEIEKLAQIINSIITCEVKDA.

N6-(pyridoxal phosphate)lysine is present on K284.

It belongs to the SelA family. Requires pyridoxal 5'-phosphate as cofactor.

The protein resides in the cytoplasm. It carries out the reaction L-seryl-tRNA(Sec) + selenophosphate + H(+) = L-selenocysteinyl-tRNA(Sec) + phosphate. It participates in aminoacyl-tRNA biosynthesis; selenocysteinyl-tRNA(Sec) biosynthesis; selenocysteinyl-tRNA(Sec) from L-seryl-tRNA(Sec) (bacterial route): step 1/1. Converts seryl-tRNA(Sec) to selenocysteinyl-tRNA(Sec) required for selenoprotein biosynthesis. The sequence is that of L-seryl-tRNA(Sec) selenium transferase from Nautilia profundicola (strain ATCC BAA-1463 / DSM 18972 / AmH).